A 279-amino-acid polypeptide reads, in one-letter code: Replication protein A 32 kDa subunit A (279 aa).

The disordered stretch occupies residues 1–39; sequence MMSFSQPDAFSPSQFTSSQNAAADSTTPSKSRGASSTMP. Positions 71–145 form a DNA-binding region, OB; sequence VRLVGLVSGK…RATAFAIRPV (75 aa). A disordered region spans residues 181–210; sequence GSSSSNGFSEMTTPTSVKSNPAPVLSVTNG. The span at 190-199 shows a compositional bias: polar residues; that stretch reads EMTTPTSVKS.

It belongs to the replication factor A protein 2 family. Heterotrimer of RPA1, RPA2 and RPA3 (canonical replication protein A complex). Interacts with RPA1A, RPA1B and RPA3. Phosphorylated in a cell-cycle-dependent manner (from the S phase until mitosis). In response to DNA damage, recruited to DNA-repair nuclear foci, as a hypophosphorylated form. Expressed in root tips, roots, shoot apical meristem (SAM), young leaves, flag leaves and ears, and at lower levels in mature leaves.

The protein resides in the nucleus. Functionally, component of the replication protein A complex (RPA) required for DNA recombination, repair and replication. The activity of RPA is mediated by single-stranded DNA binding and protein interactions. This chain is Replication protein A 32 kDa subunit A (RPA2A), found in Oryza sativa subsp. japonica (Rice).